An 869-amino-acid polypeptide reads, in one-letter code: Probable beta-glucosidase F (869 aa).

An N-terminal signal peptide occupies residues 1–19 (MRVLSAIALVASLASSALS). Residues Asn-77 and Asn-261 are each glycosylated (N-linked (GlcNAc...) asparagine). Asp-289 is an active-site residue. N-linked (GlcNAc...) asparagine glycans are attached at residues Asn-332, Asn-364, Asn-399, and Asn-478. The tract at residues 677 to 697 (STYPPTRPPKGPTPTYPTAIP) is disordered. The segment covering 681-691 (PTRPPKGPTPT) has biased composition (pro residues). N-linked (GlcNAc...) asparagine glycosylation occurs at Asn-728.

It belongs to the glycosyl hydrolase 3 family.

Its subcellular location is the secreted. The catalysed reaction is Hydrolysis of terminal, non-reducing beta-D-glucosyl residues with release of beta-D-glucose.. Its pathway is glycan metabolism; cellulose degradation. In terms of biological role, beta-glucosidases are one of a number of cellulolytic enzymes involved in the degradation of cellulosic biomass. Catalyzes the last step releasing glucose from the inhibitory cellobiose. This chain is Probable beta-glucosidase F (bglF), found in Aspergillus fumigatus (strain CBS 144.89 / FGSC A1163 / CEA10) (Neosartorya fumigata).